A 274-amino-acid chain; its full sequence is 3-methyl-2-oxobutanoate hydroxymethyltransferase (274 aa).

2 residues coordinate Mg(2+): D49 and D88. 3-methyl-2-oxobutanoate-binding positions include 49–50 (DS), D88, and K118. E120 contributes to the Mg(2+) binding site. E187 acts as the Proton acceptor in catalysis.

It belongs to the PanB family. As to quaternary structure, homodecamer; pentamer of dimers. The cofactor is Mg(2+).

It is found in the cytoplasm. It carries out the reaction 3-methyl-2-oxobutanoate + (6R)-5,10-methylene-5,6,7,8-tetrahydrofolate + H2O = 2-dehydropantoate + (6S)-5,6,7,8-tetrahydrofolate. It functions in the pathway cofactor biosynthesis; (R)-pantothenate biosynthesis; (R)-pantoate from 3-methyl-2-oxobutanoate: step 1/2. Its function is as follows. Catalyzes the reversible reaction in which hydroxymethyl group from 5,10-methylenetetrahydrofolate is transferred onto alpha-ketoisovalerate to form ketopantoate. The protein is 3-methyl-2-oxobutanoate hydroxymethyltransferase of Rhodopseudomonas palustris (strain BisB5).